A 790-amino-acid polypeptide reads, in one-letter code: MLHEARDRQKFVSDVQYLRDMQHKVDSEYQACLKRQEHKKEPNEKKQEQLWGKDTSDRSRFSSGSSCKQSSGEEDSLSEARLATKAPTAKCEPKLPAIDQTSVKQKHKGTMTLKKPEKVSPSKPSAVAQATKILSRKRRPNLGRLTVSPEMHSPRLSGERSRQKAQLSTKTSGLLGADPVVQQDSLLSANEMKLKRPAREKRNLAPSSQLVRVAGKAPLERQKKGDPSARPQNEPHTALSQTFQPMSGSQVLTESSVPPFLPATVVGPRRAPFRFHDEDFYSALSLNNEQENYDTEEETRTEEELLLAGMRSPPSYKRSRFLGTSAAQNRNVEENAENLRGNSLRRSEPNPGSPRKTSVTEPTTKQSSPGQRMLQDTRLPRELAKDNPSGDQDEKTPVPGDAKSDGVTQVSAEDVSNNCAVEDRSAVHNCERDWQRYLSGSRNSFDCLLSGRPTAPRASVNPSYNAHGSLFHSAVIDDIPASLSVSSILVPSAELEENLRFNVRRPLSPIRNRNPSAASESHSEDTQGEEERASTSQAQESPLLSDLPNPQSSMALGDSPSSPTRRHLQGHFYMPGSLQENIPFTFFAVSDFASQNDNGTSVRVSGVMDEKATEIKADPEKLRKLQESLLEEDSEEEGDLCRICQIAGGSPANPLLEPCGCVGSLQFVHQECLKKWLKVKITSGADLSTVKTCEMCKQGLLVDLDDFNMTEFYHKHQQSRAQSELMNSGLYLVLLLHLYEQRFAELMTLNYRRASRERMSRNYPQPRPEESESSESGDGNESNVYPGRVI.

Positions 33–240 are disordered; the sequence is LKRQEHKKEP…PQNEPHTALS (208 aa). The span at 34-48 shows a compositional bias: basic and acidic residues; the sequence is KRQEHKKEPNEKKQE. The segment covering 61–70 has biased composition (low complexity); the sequence is FSSGSSCKQS. Ser78 is modified (phosphoserine). Residues 218–227 are compositionally biased toward basic and acidic residues; it reads PLERQKKGDP. Polar residues predominate over residues 230–240; that stretch reads RPQNEPHTALS. Residues 284–308 adopt a coiled-coil conformation; sequence LSLNNEQENYDTEEETRTEEELLLA. 2 disordered regions span residues 323-416 and 507-569; these read GTSA…EDVS and LSPI…RHLQ. Polar residues-rich tracts occupy residues 355–370, 406–416, and 511–520; these read RKTSVTEPTTKQSSPG, GVTQVSAEDVS, and RNRNPSAASE. Over residues 521 to 533 the composition is skewed to basic and acidic residues; the sequence is SHSEDTQGEEERA. A compositionally biased stretch (polar residues) spans 534–563; that stretch reads STSQAQESPLLSDLPNPQSSMALGDSPSSP. The segment at 633 to 703 adopts an RING-CH-type zinc-finger fold; it reads DSEEEGDLCR…EMCKQGLLVD (71 aa). The Zn(2+) site is built by Cys641, Cys644, Cys659, Cys661, His669, Cys672, Cys693, and Cys696. Positions 757 to 790 are disordered; that stretch reads ERMSRNYPQPRPEESESSESGDGNESNVYPGRVI. A compositionally biased stretch (low complexity) spans 774–783; it reads SESGDGNESN.

The catalysed reaction is S-ubiquitinyl-[E2 ubiquitin-conjugating enzyme]-L-cysteine + [acceptor protein]-L-lysine = [E2 ubiquitin-conjugating enzyme]-L-cysteine + N(6)-ubiquitinyl-[acceptor protein]-L-lysine.. Its pathway is protein modification; protein ubiquitination. Functionally, E3 ubiquitin-protein ligase. E3 ubiquitin ligases accept ubiquitin from an E2 ubiquitin-conjugating enzyme in the form of a thioester and then directly transfer the ubiquitin to targeted substrates. The chain is Probable E3 ubiquitin-protein ligase MARCHF10 (Marchf10) from Rattus norvegicus (Rat).